The chain runs to 151 residues: 4-hydroxybenzoyl-CoA thioesterase (151 aa).

Glu-73 is an active-site residue. Residue 100–102 (FFR) participates in substrate binding.

It belongs to the thioesterase PaaI family. As to quaternary structure, homotetramer.

The enzyme catalyses 4-hydroxybenzoyl-CoA + H2O = 4-hydroxybenzoate + CoA + H(+). The protein operates within xenobiotic degradation; 4-chlorobenzoate degradation; 4-hydroxybenzoate from 4-chlorobenzoate: step 3/3. The protein is 4-hydroxybenzoyl-CoA thioesterase of Arthrobacter globiformis.